The sequence spans 1127 residues: uncharacterized protein (1127 aa).

An N-terminal signal peptide occupies residues 1–26; sequence MRIHQRSAPCVPVLLFLFLPSAPLCA. A disordered region spans residues 533–600; it reads ETESLSPPAD…ASSSPSEMAV (68 aa). 2 stretches are compositionally biased toward low complexity: residues 536–549 and 583–599; these read SLSP…TPSP and AGAS…SEMA. Residues 1076–1126 adopt a coiled-coil conformation; sequence SEDEKEYQRALQELQKGNKLVASAVVEQLLQKDRNKKSAKIQQLKKRIDAQ.

This is an uncharacterized protein from Treponema pallidum (strain Nichols).